The chain runs to 265 residues: Methylthioribulose-1-phosphate dehydratase (265 aa).

Residue Cys118 coordinates substrate. The Zn(2+) site is built by His136 and His138. Glu161 functions as the Proton donor/acceptor in the catalytic mechanism. Zn(2+) is bound at residue His226.

It belongs to the aldolase class II family. MtnB subfamily. Zn(2+) is required as a cofactor.

It localises to the cytoplasm. The enzyme catalyses 5-(methylsulfanyl)-D-ribulose 1-phosphate = 5-methylsulfanyl-2,3-dioxopentyl phosphate + H2O. It functions in the pathway amino-acid biosynthesis; L-methionine biosynthesis via salvage pathway; L-methionine from S-methyl-5-thio-alpha-D-ribose 1-phosphate: step 2/6. Its function is as follows. Catalyzes the dehydration of methylthioribulose-1-phosphate (MTRu-1-P) into 2,3-diketo-5-methylthiopentyl-1-phosphate (DK-MTP-1-P). In Scheffersomyces stipitis (strain ATCC 58785 / CBS 6054 / NBRC 10063 / NRRL Y-11545) (Yeast), this protein is Methylthioribulose-1-phosphate dehydratase.